The sequence spans 144 residues: Nucleoside diphosphate kinase (144 aa).

ATP-binding residues include Lys-11, Phe-59, Arg-87, Thr-93, Arg-104, and Asn-114. The active-site Pros-phosphohistidine intermediate is His-117.

Belongs to the NDK family. In terms of assembly, homotetramer. Requires Mg(2+) as cofactor.

The protein resides in the cytoplasm. It catalyses the reaction a 2'-deoxyribonucleoside 5'-diphosphate + ATP = a 2'-deoxyribonucleoside 5'-triphosphate + ADP. The catalysed reaction is a ribonucleoside 5'-diphosphate + ATP = a ribonucleoside 5'-triphosphate + ADP. In terms of biological role, major role in the synthesis of nucleoside triphosphates other than ATP. The ATP gamma phosphate is transferred to the NDP beta phosphate via a ping-pong mechanism, using a phosphorylated active-site intermediate. This Psychromonas ingrahamii (strain DSM 17664 / CCUG 51855 / 37) protein is Nucleoside diphosphate kinase.